The primary structure comprises 236 residues: UPF0257 lipoprotein YnfC (236 aa).

The N-terminal stretch at 1-16 (MKYKLLPCLLAIFLTG) is a signal peptide. Cys17 carries the N-palmitoyl cysteine lipid modification. Cys17 carries the S-diacylglycerol cysteine lipid modification.

This sequence belongs to the UPF0257 family.

Its subcellular location is the cell membrane. The sequence is that of UPF0257 lipoprotein YnfC (ynfC) from Shigella flexneri.